The primary structure comprises 130 residues: Small ribosomal subunit protein uS8 (130 aa).

Belongs to the universal ribosomal protein uS8 family. In terms of assembly, part of the 30S ribosomal subunit.

One of the primary rRNA binding proteins, it binds directly to 16S rRNA central domain where it helps coordinate assembly of the platform of the 30S subunit. This Pyrobaculum islandicum (strain DSM 4184 / JCM 9189 / GEO3) protein is Small ribosomal subunit protein uS8.